Reading from the N-terminus, the 441-residue chain is Histidinol dehydrogenase homolog (441 aa).

H266 contributes to the Zn(2+) binding site. Active-site proton acceptor residues include E334 and H335. Zn(2+) is bound at residue H427.

Belongs to the histidinol dehydrogenase family. It depends on Zn(2+) as a cofactor.

The protein is Histidinol dehydrogenase homolog of Cereibacter sphaeroides (strain ATCC 17023 / DSM 158 / JCM 6121 / CCUG 31486 / LMG 2827 / NBRC 12203 / NCIMB 8253 / ATH 2.4.1.) (Rhodobacter sphaeroides).